The primary structure comprises 483 residues: Proton-coupled amino acid transporter 2 (483 aa).

Over 1 to 58 the chain is Cytoplasmic; that stretch reads MSVTKSTEGPQGAVAIKLDLMSPPESAKKLENKDSTFLDESPSESAGLKKTKGITVFQ. The segment covering 26–36 has biased composition (basic and acidic residues); that stretch reads SAKKLENKDST. The disordered stretch occupies residues 26-46; the sequence is SAKKLENKDSTFLDESPSESA. A helical transmembrane segment spans residues 59-79; that stretch reads ALIHLVKGNMGTGILGLPLAV. At 80-81 the chain is on the extracellular side; sequence KN. A helical transmembrane segment spans residues 82 to 102; the sequence is AGILMGPLSLLVMGFIACHCM. Topologically, residues 103–148 are cytoplasmic; that stretch reads HILVKCAQRFCKRLNKPFMDYGDTVMHGLEANPNAWLQNHAHWGRH. A helical transmembrane segment spans residues 149–169; that stretch reads IVSFFLIITQLGFCCVYIVFL. The Extracellular portion of the chain corresponds to 170–197; that stretch reads ADNLKQVVEAVNSTTNNCYSNETVILTP. A helical transmembrane segment spans residues 198–218; the sequence is TMDSRLYMLSFLPFLVLLVLI. At 219 to 222 the chain is on the cytoplasmic side; the sequence is RNLR. A helical membrane pass occupies residues 223–243; that stretch reads ILTIFSMLANISMLVSLVIII. Residues 244–264 lie on the Extracellular side of the membrane; sequence QYITQEIPDPSRLPLVASWKT. The chain crosses the membrane as a helical span at residues 265–285; that stretch reads YPLFFGTAIFSFESIGVVLPL. Topologically, residues 286 to 296 are cytoplasmic; sequence ENKMKNARHFP. Residues 297-317 form a helical membrane-spanning segment; that stretch reads AILSLGMSIVTSLYIGMAALG. Residues 318 to 349 are Extracellular-facing; the sequence is YLRFGDDIKASISLNLPNCWLYQSVKLLYIAG. The helical transmembrane segment at 350–370 threads the bilayer; sequence ILCTYALQFYVPAEIIIPFAI. At 371-379 the chain is on the cytoplasmic side; the sequence is SRVSTRWAL. Residues 380–400 traverse the membrane as a helical segment; that stretch reads PLDLSIRLVMVCLTCLLAILI. Topologically, residues 401-404 are extracellular; that stretch reads PRLD. Residues 405–425 traverse the membrane as a helical segment; sequence LVISLVGSVSGTALALIIPPL. Topologically, residues 426–437 are cytoplasmic; it reads LEVTTFYSEGMS. The helical transmembrane segment at 438-458 threads the bilayer; sequence PLTIFKDALISILGFVGFVVG. Over 459 to 483 the chain is Extracellular; that stretch reads TYQALDELLKSEDSHPFSNSTTFVR.

Belongs to the amino acid/polyamine transporter 2 family. In terms of tissue distribution, abundantly expressed in kidney and muscle. Expressed in the S1 segment of the proximal tubule close to the glomerulus.

Its subcellular location is the cell membrane. It localises to the endoplasmic reticulum membrane. The protein resides in the recycling endosome membrane. It carries out the reaction glycine(in) + H(+)(in) = glycine(out) + H(+)(out). The enzyme catalyses L-alanine(in) + H(+)(in) = L-alanine(out) + H(+)(out). The catalysed reaction is D-alanine(in) + H(+)(in) = D-alanine(out) + H(+)(out). It catalyses the reaction L-proline(out) + H(+)(out) = L-proline(in) + H(+)(in). It carries out the reaction D-proline(out) + H(+)(out) = D-proline(in) + H(+)(in). The enzyme catalyses 4-hydroxy-L-proline(in) + H(+)(in) = 4-hydroxy-L-proline(out) + H(+)(out). The catalysed reaction is L-serine(in) + H(+)(in) = L-serine(out) + H(+)(out). It catalyses the reaction D-serine(out) + H(+)(out) = D-serine(in) + H(+)(in). It carries out the reaction beta-alanine(in) + H(+)(in) = beta-alanine(out) + H(+)(out). The enzyme catalyses 4-aminobutanoate(in) + H(+)(in) = 4-aminobutanoate(out) + H(+)(out). The catalysed reaction is sarcosine(in) + H(+)(in) = sarcosine(out) + H(+)(out). It catalyses the reaction N,N-dimethylglycine(in) + H(+)(in) = N,N-dimethylglycine(out) + H(+)(out). Its function is as follows. Electrogenic proton/amino acid symporter with a high selectivity for the small side chains amino acids glycine, alanine and proline, where both L- and D-enantiomers are transported. Extension of the backbone length, as in beta-alanine and 4-aminobutanoate or methylation of the amino group, as in sarcosine and N,N-dimethylglycine, are also tolerated but decrease transport efficiency. A free carboxyl group is preferred. This chain is Proton-coupled amino acid transporter 2, found in Homo sapiens (Human).